Here is a 437-residue protein sequence, read N- to C-terminus: Asparagine--tRNA ligase (437 aa).

This sequence belongs to the class-II aminoacyl-tRNA synthetase family. In terms of assembly, homodimer.

Its subcellular location is the cytoplasm. It catalyses the reaction tRNA(Asn) + L-asparagine + ATP = L-asparaginyl-tRNA(Asn) + AMP + diphosphate + H(+). The protein is Asparagine--tRNA ligase of Symbiobacterium thermophilum (strain DSM 24528 / JCM 14929 / IAM 14863 / T).